The chain runs to 412 residues: Serine hydroxymethyltransferase (412 aa).

(6S)-5,6,7,8-tetrahydrofolate-binding positions include Leu117 and 121–123 (GHL). Lys226 is modified (N6-(pyridoxal phosphate)lysine). Residues Glu242 and 350–352 (SPF) each bind (6S)-5,6,7,8-tetrahydrofolate.

Belongs to the SHMT family. In terms of assembly, homodimer. It depends on pyridoxal 5'-phosphate as a cofactor.

It localises to the cytoplasm. It catalyses the reaction (6R)-5,10-methylene-5,6,7,8-tetrahydrofolate + glycine + H2O = (6S)-5,6,7,8-tetrahydrofolate + L-serine. The protein operates within one-carbon metabolism; tetrahydrofolate interconversion. It functions in the pathway amino-acid biosynthesis; glycine biosynthesis; glycine from L-serine: step 1/1. Functionally, catalyzes the reversible interconversion of serine and glycine with tetrahydrofolate (THF) serving as the one-carbon carrier. Also exhibits THF-independent aldolase activity toward beta-hydroxyamino acids, producing glycine and aldehydes, via a retro-aldol mechanism. The protein is Serine hydroxymethyltransferase of Methanosarcina acetivorans (strain ATCC 35395 / DSM 2834 / JCM 12185 / C2A).